The sequence spans 351 residues: Ferredoxin--NADP reductase (351 aa).

Thr14, Asp33, Gln41, Tyr46, Ala86, Phe121, Asp287, and Thr328 together coordinate FAD.

The protein belongs to the ferredoxin--NADP reductase type 2 family. As to quaternary structure, homodimer. It depends on FAD as a cofactor.

It catalyses the reaction 2 reduced [2Fe-2S]-[ferredoxin] + NADP(+) + H(+) = 2 oxidized [2Fe-2S]-[ferredoxin] + NADPH. This is Ferredoxin--NADP reductase from Flavobacterium psychrophilum (strain ATCC 49511 / DSM 21280 / CIP 103535 / JIP02/86).